A 577-amino-acid chain; its full sequence is Proline--tRNA ligase (577 aa).

It belongs to the class-II aminoacyl-tRNA synthetase family. ProS type 1 subfamily. As to quaternary structure, homodimer.

Its subcellular location is the cytoplasm. The catalysed reaction is tRNA(Pro) + L-proline + ATP = L-prolyl-tRNA(Pro) + AMP + diphosphate. Functionally, catalyzes the attachment of proline to tRNA(Pro) in a two-step reaction: proline is first activated by ATP to form Pro-AMP and then transferred to the acceptor end of tRNA(Pro). As ProRS can inadvertently accommodate and process non-cognate amino acids such as alanine and cysteine, to avoid such errors it has two additional distinct editing activities against alanine. One activity is designated as 'pretransfer' editing and involves the tRNA(Pro)-independent hydrolysis of activated Ala-AMP. The other activity is designated 'posttransfer' editing and involves deacylation of mischarged Ala-tRNA(Pro). The misacylated Cys-tRNA(Pro) is not edited by ProRS. The protein is Proline--tRNA ligase of Helicobacter pylori (strain P12).